A 472-amino-acid polypeptide reads, in one-letter code: 3-isopropylmalate dehydratase large subunit (472 aa).

Residues Cys353, Cys414, and Cys417 each coordinate [4Fe-4S] cluster.

This sequence belongs to the aconitase/IPM isomerase family. LeuC type 1 subfamily. As to quaternary structure, heterodimer of LeuC and LeuD. The cofactor is [4Fe-4S] cluster.

It catalyses the reaction (2R,3S)-3-isopropylmalate = (2S)-2-isopropylmalate. The protein operates within amino-acid biosynthesis; L-leucine biosynthesis; L-leucine from 3-methyl-2-oxobutanoate: step 2/4. Catalyzes the isomerization between 2-isopropylmalate and 3-isopropylmalate, via the formation of 2-isopropylmaleate. The protein is 3-isopropylmalate dehydratase large subunit of Acinetobacter baumannii (strain ACICU).